A 319-amino-acid chain; its full sequence is MESEIASEFLPFCRIYKDGRVERLIGTDTIPASLDPTYDVVSKDVIYSPENNLSVRLFLPHKSTKLTAGNKLPLLIYIHGGAWIIESPFSPLYHNYLTEVVKSANCLAVSVQYRRAPEDPVPAAYEDVWSAIQWIFAHSNGSGPVDWINKHADFGKVFLGGDSAGGNISHHMAMKAGKEKKLDLKIKGIAVVHPAFWGTDPVDEYDVQDKETRSGIAEIWEKIASPNSVNGTDDPLFNVNGSGSDFSGLGCDKVLVAVAGKDVFVRQGLAYAAKLEKCEWEGTVEVVEEEGEDHVFHLQNPKSDKALKFLKKFVEFIIG.

Methionine 1 carries the post-translational modification N-acetylmethionine. The Involved in the stabilization of the negatively charged intermediate by the formation of the oxyanion hole motif lies at histidine 79 to glycine 81. Residues serine 163, aspartate 262, and histidine 294 contribute to the active site.

This sequence belongs to the 'GDXG' lipolytic enzyme family. In terms of tissue distribution, expressed in roots, leaves, stems, flowers and siliques.

The catalysed reaction is a carboxylic ester + H2O = an alcohol + a carboxylate + H(+). In terms of biological role, carboxylesterase acting on esters with varying acyl chain length. In Arabidopsis thaliana (Mouse-ear cress), this protein is Probable carboxylesterase 5 (CXE5).